Consider the following 416-residue polypeptide: MRKADLVVGVQWGDEGKGKIVDMLGLNYDMICRSQGGHNAGHTIWVDGVRYAMHLIPSGILHKNIVNVIGNGVVVSPDVLIDEMAQFDHLEGRFYISDRAHLNLTHHGLIDQAKERLKGDKAIGTTGKGIGPTYADKISRSGHRVGELLEPERLCEALMSDFEMNKSLFNALGVKIPKRDELLEELKRYKEALAPYITNTTRLVWKALDDGKKVLLEGAQGTLLDIDHGTYPYVTSSNTISAGACTGLGLNPKEMGEVIGVIKAYTTRVGFGPFPTEDKGSDGDKMCEVGKEFGTTTGRRRRCGWFDAVSVKYASRLDAVDKYALMKLDVLDGFEVVKICKAYQYNGETIDYVPTDLENVTPIYEDLEGWDSVKGVTRYDDLPKNAKRYIERIEELTGVKVGLISTSPERSDTIIR.

GTP contacts are provided by residues 13–19 (GDEGKGK) and 41–43 (GHT). The active-site Proton acceptor is Asp14. Mg(2+)-binding residues include Asp14 and Gly41. Residues 14 to 17 (DEGK), 39 to 42 (NAGH), Thr126, Arg140, Gln220, Thr235, and Arg299 each bind IMP. His42 serves as the catalytic Proton donor. 295 to 301 (TTTGRRR) contributes to the substrate binding site. Residues Arg301, 327 to 329 (KLD), and 405 to 407 (STS) each bind GTP.

It belongs to the adenylosuccinate synthetase family. As to quaternary structure, homodimer. Mg(2+) is required as a cofactor.

It localises to the cytoplasm. The catalysed reaction is IMP + L-aspartate + GTP = N(6)-(1,2-dicarboxyethyl)-AMP + GDP + phosphate + 2 H(+). It functions in the pathway purine metabolism; AMP biosynthesis via de novo pathway; AMP from IMP: step 1/2. Functionally, plays an important role in the de novo pathway of purine nucleotide biosynthesis. Catalyzes the first committed step in the biosynthesis of AMP from IMP. The sequence is that of Adenylosuccinate synthetase from Campylobacter curvus (strain 525.92).